A 290-amino-acid polypeptide reads, in one-letter code: MDYMRIFSVFVVTLWIIRVDARVFGGRGIEKFVTFGQNYIVTWGQSHVSTLHSGEEVDLYMDQSSGGGFESKDAYGSGLFEMRIKVPSGNTGGIVTAFYLTSKGGGHDEIDFEFLGNNNGKPVTLQTNLFLNGEGNREERFLLWFNPTKHYHTYGLLWNPYQIVFYVDNIPIRVYKNENGVSYPSKPMQVEASLWNGDDWATDGGRTKVNWSYSPFIAHFRDFALSGCNIDGRSNNVGACESSNYWWNAGNYQRLSGNEQKLYEHVRSKYMNYDYCTDRSKYQTPPRECY.

The first 21 residues, 1-21 (MDYMRIFSVFVVTLWIIRVDA), serve as a signal peptide directing secretion. The region spanning 22–220 (RVFGGRGIEK…WSYSPFIAHF (199 aa)) is the GH16 domain. Glu-109 acts as the Nucleophile in catalysis. Catalysis depends on Glu-113, which acts as the Proton donor. Xyloglucan contacts are provided by residues Glu-113, 126–128 (QTN), 136–138 (NRE), 199–200 (DW), and Gly-204. Asn-210 is a glycosylation site (N-linked (GlcNAc...) asparagine). 2 disulfide bridges follow: Cys-228/Cys-240 and Cys-276/Cys-289.

This sequence belongs to the glycosyl hydrolase 16 family. XTH group 1 subfamily. Contains at least one intrachain disulfide bond essential for its enzymatic activity. Predominantly expressed in flower buds.

It localises to the secreted. The protein resides in the cell wall. Its subcellular location is the extracellular space. The protein localises to the apoplast. The catalysed reaction is breaks a beta-(1-&gt;4) bond in the backbone of a xyloglucan and transfers the xyloglucanyl segment on to O-4 of the non-reducing terminal glucose residue of an acceptor, which can be a xyloglucan or an oligosaccharide of xyloglucan.. Catalyzes xyloglucan endohydrolysis (XEH) and/or endotransglycosylation (XET). Cleaves and religates xyloglucan polymers, an essential constituent of the primary cell wall, and thereby participates in cell wall construction of growing tissues. The polypeptide is Xyloglucan endotransglucosylase/hydrolase protein 3 (XTH3) (Arabidopsis thaliana (Mouse-ear cress)).